The sequence spans 646 residues: MSTSKSSKVRIRNFIGRIFSPSDKDKDRDDEMKPSSSAMDISQPYNTVHRVHVGYDGQKFSGLPQPWMDILLRDISLADQKKDPNAVVTALKFYAQSMKENEKTKFMTTNSVFTNSDDDDVDVQLTGQVTEHLRNLQCSNGSATSPSTSVSASSSSARPLTNGNNHLSTASSTDTSLSLSERNNVPSPAPVPYSESAPQLKTFTGETPKLHPRSPFPPQPPVLPQRSKTASAVATTTTNPTTSNGAPPPVPGSKGPPVPPKPSHLKIASSTVSSGCSSPQQYSSARSVGNSLSNGSVVSTTSSDGDVQLSNKENSNDKSVGDKNGNTTTNKTTVEPPPPEEPPVRVRASHREKLSDSEVLNQLREIVNPSNPLGKYEMKKQIGVGASGTVFVANVAGSTDVVAVKRMAFKTQPKKEMLLTEIKVMKQYRHPNLVNYIESYLVDADDLWVVMDYLEGGNLTDVVVKTELDEGQIAAVLQECLKALHFLHRHSIVHRDIKSDNVLLGMNGEVKLTDMGFCAQIQPGSKRDTVVGTPYWMSPEILNKKQYNYKVDIWSLGIMALEMIDGEPPYLRETPLKAIYLIAQNGKPEIKQRDRLSSEFNNFLDKCLVVDPDQRADTTELLAHPFLKKAKPLSSLIPYIRAVREK.

The interval F19–D40 is disordered. The segment covering S22–K33 has biased composition (basic and acidic residues). A CRIB domain is found at I41–G54. Positions L136–R345 are disordered. Low complexity-rich tracts occupy residues S142–A157 and L167–S180. Over residues S196–G205 the composition is skewed to polar residues. A compositionally biased stretch (pro residues) spans S214 to L223. The span at T229 to G245 shows a compositional bias: low complexity. Over residues A246–P262 the composition is skewed to pro residues. Composition is skewed to low complexity over residues S273–V307 and K323–V334. The 252-residue stretch at Y376–L627 folds into the Protein kinase domain. ATP is bound by residues I382–V390 and K405. D496 (proton acceptor) is an active-site residue.

Belongs to the protein kinase superfamily. STE Ser/Thr protein kinase family. STE20 subfamily. As to quaternary structure, interacts with mlk-1; the interaction is independent of max-2 and mlk-1 kinase activities. Interacts with mig-2 (GTP-bound form). Mg(2+) is required as a cofactor.

The protein localises to the perikaryon. It is found in the cell projection. Its subcellular location is the dendrite. The protein resides in the cytoplasm. The catalysed reaction is L-seryl-[protein] + ATP = O-phospho-L-seryl-[protein] + ADP + H(+). It carries out the reaction L-threonyl-[protein] + ATP = O-phospho-L-threonyl-[protein] + ADP + H(+). In terms of biological role, serine/threonine-protein kinase, which phosphorylates mlk-1. Involved in the stress response to heavy metals by activating the mlk-1/mek-1/kgb-1 pathway. In ventral cord commissural motoneurons, required for dorsal axon guidance downstream of unc-6/netrin repulsion receptor unc-5 and probably of Rho GTPases ced-10 and mig-2. Plays a redundant role with mig-10 in orientating axonal growth of HSN neurons. Plays a redundant role with pak-1 in P neuroblast migration and in distal tip cell (DTC)-mediated guidance of gonad elongation probably downstream of Rho GTPases. In association with pak-2, plays a role in embryogenesis. In association with pak-1, may be involved in spermatogenesis. This Caenorhabditis elegans protein is Serine/threonine-protein kinase max-2.